The following is a 249-amino-acid chain: Ribonuclease 3 (249 aa).

The RNase III domain maps to 20-149 (FKKFQERISV…FIGALYLDQG (130 aa)). Position 62 (Glu62) interacts with Mg(2+). The active site involves Asp66. Mg(2+) is bound by residues Asp135 and Glu138. Glu138 is a catalytic residue. A DRBM domain is found at 175–244 (DFKSQLQEFV…AQEALAKLQK (70 aa)). Residues 225–249 (RSKKEAEQHAAQEALAKLQKHHMKQ) form a disordered region.

The protein belongs to the ribonuclease III family. As to quaternary structure, homodimer. It depends on Mg(2+) as a cofactor.

The protein localises to the cytoplasm. It catalyses the reaction Endonucleolytic cleavage to 5'-phosphomonoester.. Its function is as follows. Digests double-stranded RNA. Involved in the processing of primary rRNA transcript to yield the immediate precursors to the large and small rRNAs (23S and 16S). Processes some mRNAs, and tRNAs when they are encoded in the rRNA operon. Processes pre-crRNA and tracrRNA of type II CRISPR loci if present in the organism. In Bacillus licheniformis (strain ATCC 14580 / DSM 13 / JCM 2505 / CCUG 7422 / NBRC 12200 / NCIMB 9375 / NCTC 10341 / NRRL NRS-1264 / Gibson 46), this protein is Ribonuclease 3.